Here is a 465-residue protein sequence, read N- to C-terminus: Siroheme synthase (465 aa).

Residues 1–203 (MDFLPLFHSL…GRPAEAERLL (203 aa)) are precorrin-2 dehydrogenase /sirohydrochlorin ferrochelatase. Residues 22 to 23 (EV) and 43 to 44 (PQ) contribute to the NAD(+) site. Ser-128 carries the post-translational modification Phosphoserine. The segment at 217–465 (GEVYLVGAGP…AWFEGAREDA (249 aa)) is uroporphyrinogen-III C-methyltransferase. Residue Pro-226 participates in S-adenosyl-L-methionine binding. Asp-249 functions as the Proton acceptor in the catalytic mechanism. Catalysis depends on Lys-271, which acts as the Proton donor. Residues 302 to 304 (GGD), Ile-307, 332 to 333 (TA), Met-384, and Gly-413 contribute to the S-adenosyl-L-methionine site.

In the N-terminal section; belongs to the precorrin-2 dehydrogenase / sirohydrochlorin ferrochelatase family. This sequence in the C-terminal section; belongs to the precorrin methyltransferase family.

The enzyme catalyses uroporphyrinogen III + 2 S-adenosyl-L-methionine = precorrin-2 + 2 S-adenosyl-L-homocysteine + H(+). The catalysed reaction is precorrin-2 + NAD(+) = sirohydrochlorin + NADH + 2 H(+). It carries out the reaction siroheme + 2 H(+) = sirohydrochlorin + Fe(2+). It functions in the pathway cofactor biosynthesis; adenosylcobalamin biosynthesis; precorrin-2 from uroporphyrinogen III: step 1/1. It participates in cofactor biosynthesis; adenosylcobalamin biosynthesis; sirohydrochlorin from precorrin-2: step 1/1. Its pathway is porphyrin-containing compound metabolism; siroheme biosynthesis; precorrin-2 from uroporphyrinogen III: step 1/1. The protein operates within porphyrin-containing compound metabolism; siroheme biosynthesis; siroheme from sirohydrochlorin: step 1/1. It functions in the pathway porphyrin-containing compound metabolism; siroheme biosynthesis; sirohydrochlorin from precorrin-2: step 1/1. Multifunctional enzyme that catalyzes the SAM-dependent methylations of uroporphyrinogen III at position C-2 and C-7 to form precorrin-2 via precorrin-1. Then it catalyzes the NAD-dependent ring dehydrogenation of precorrin-2 to yield sirohydrochlorin. Finally, it catalyzes the ferrochelation of sirohydrochlorin to yield siroheme. This chain is Siroheme synthase, found in Pseudomonas aeruginosa (strain ATCC 15692 / DSM 22644 / CIP 104116 / JCM 14847 / LMG 12228 / 1C / PRS 101 / PAO1).